The following is a 137-amino-acid chain: uncharacterized protein (137 aa).

Residues 31-83 form a disordered region; that stretch reads PASPINDKEKDKAGGRLPSGSEPRARAFCEAGADGEQGDPSPADTIKANQGHI.

This is an uncharacterized protein from Homo sapiens (Human).